The chain runs to 178 residues: Crossover junction endodeoxyribonuclease RuvC (178 aa).

Catalysis depends on residues Asp-20, Glu-80, and Asp-154. Asp-20, Glu-80, and Asp-154 together coordinate Mg(2+).

The protein belongs to the RuvC family. As to quaternary structure, homodimer which binds Holliday junction (HJ) DNA. The HJ becomes 2-fold symmetrical on binding to RuvC with unstacked arms; it has a different conformation from HJ DNA in complex with RuvA. In the full resolvosome a probable DNA-RuvA(4)-RuvB(12)-RuvC(2) complex forms which resolves the HJ. Mg(2+) is required as a cofactor.

The protein resides in the cytoplasm. The catalysed reaction is Endonucleolytic cleavage at a junction such as a reciprocal single-stranded crossover between two homologous DNA duplexes (Holliday junction).. Functionally, the RuvA-RuvB-RuvC complex processes Holliday junction (HJ) DNA during genetic recombination and DNA repair. Endonuclease that resolves HJ intermediates. Cleaves cruciform DNA by making single-stranded nicks across the HJ at symmetrical positions within the homologous arms, yielding a 5'-phosphate and a 3'-hydroxyl group; requires a central core of homology in the junction. The consensus cleavage sequence is 5'-(A/T)TT(C/G)-3'. Cleavage occurs on the 3'-side of the TT dinucleotide at the point of strand exchange. HJ branch migration catalyzed by RuvA-RuvB allows RuvC to scan DNA until it finds its consensus sequence, where it cleaves and resolves the cruciform DNA. The polypeptide is Crossover junction endodeoxyribonuclease RuvC (Rhodopirellula baltica (strain DSM 10527 / NCIMB 13988 / SH1)).